The chain runs to 104 residues: Thioredoxin (104 aa).

Residues 2–104 enclose the Thioredoxin domain; it reads KQVSDASFEE…KLFEWVEASV (103 aa). Cys-29 and Cys-32 form a disulfide bridge.

Belongs to the thioredoxin family.

In terms of biological role, participates in various redox reactions through the reversible oxidation of its active center dithiol to a disulfide and catalyzes dithiol-disulfide exchange reactions. In Rhodospirillum rubrum, this protein is Thioredoxin (trxA).